The following is a 129-amino-acid chain: Large ribosomal subunit protein bL12 (129 aa).

Belongs to the bacterial ribosomal protein bL12 family. In terms of assembly, homodimer. Part of the ribosomal stalk of the 50S ribosomal subunit. Forms a multimeric L10(L12)X complex, where L10 forms an elongated spine to which 2 to 4 L12 dimers bind in a sequential fashion. Binds GTP-bound translation factors.

Forms part of the ribosomal stalk which helps the ribosome interact with GTP-bound translation factors. Is thus essential for accurate translation. The polypeptide is Large ribosomal subunit protein bL12 (Fervidobacterium nodosum (strain ATCC 35602 / DSM 5306 / Rt17-B1)).